Consider the following 559-residue polypeptide: Proton-coupled zinc antiporter SLC30A9, mitochondrial (559 aa).

The segment at 58–96 (SSDQKEDGGSKGTSAASSPEKSMAGLDPSKPEQKSTFPP) is disordered. 5 helical membrane-spanning segments follow: residues 230–250 (VVIV…LAWV), 305–325 (GVGI…IGLL), 333–353 (LLWA…TLLV), 389–409 (AAAV…SLTG), and 415–435 (SLGS…LIYT). An LXXLL motif motif is present at residues 453–457 (LTELL).

Belongs to the cation diffusion facilitator (CDF) transporter (TC 2.A.4) family. SLC30A subfamily.

The protein resides in the mitochondrion membrane. It localises to the nucleus. It is found in the endoplasmic reticulum. The catalysed reaction is Zn(2+)(in) + 2 H(+)(out) = Zn(2+)(out) + 2 H(+)(in). Mitochondrial proton-coupled zinc ion antiporter mediating the export of zinc from the mitochondria and involved in zinc homeostasis, zinc mobilization as well as mitochondrial morphology and health. In nucleus, may function as a secondary coactivator for nuclear receptors. The sequence is that of Proton-coupled zinc antiporter SLC30A9, mitochondrial (slc30a9) from Xenopus laevis (African clawed frog).